We begin with the raw amino-acid sequence, 235 residues long: Protein fmp52-1, mitochondrial (235 aa).

Residues 1 to 36 (MANTALIGCTGMVGSFILNNLLAHPSVARVDTISRR) constitute a mitochondrion transit peptide.

The protein belongs to the FMP52 family.

The protein localises to the mitochondrion outer membrane. The protein is Protein fmp52-1, mitochondrial (fmp521) of Aspergillus oryzae (strain ATCC 42149 / RIB 40) (Yellow koji mold).